Here is a 181-residue protein sequence, read N- to C-terminus: 30 kDa heat shock protein (181 aa).

Residues 33–181 (ASVQSFAPRF…PPTAKKITIQ (149 aa)) enclose the sHSP domain. Basic and acidic residues predominate over residues 79–115 (GRSEREYHSSSDDNKNDQADTENQARGESSEVAKTGE). A disordered region spans residues 79-127 (GRSEREYHSSSDDNKNDQADTENQARGESSEVAKTGEKQVSTKKAANKS).

This sequence belongs to the small heat shock protein (HSP20) family.

The sequence is that of 30 kDa heat shock protein (hsp30) from Emericella nidulans (strain FGSC A4 / ATCC 38163 / CBS 112.46 / NRRL 194 / M139) (Aspergillus nidulans).